The chain runs to 62 residues: uncharacterized protein (62 aa).

Positions 1–19 are cleaved as a signal peptide; sequence MKLIILLFVVAAFVTLAMG.

This is an uncharacterized protein from Lepidoptera (butterflies and moths).